The sequence spans 8886 residues: Obscurin (8886 aa).

4 Ig-like domains span residues 9-99 (PRFL…LRVD), 109-201 (PHFL…LVVD), 234-320 (PPSP…QTYS), and 329-415 (PTVP…AELS). Cys30 and Cys81 are joined by a disulfide. The interval 135-165 (SPQPAVSWSKDGRRLGPPDAPHVRVEEHGES) is disordered. A compositionally biased stretch (basic and acidic residues) spans 144-164 (KDGRRLGPPDAPHVRVEEHGE). 2 cysteine pairs are disulfide-bonded: Cys257/Cys309 and Cys352/Cys402. At Ser393 the chain carries Phosphoserine. The region spanning 513 to 610 (PPADPVVKAK…FPGTMHLVPM (98 aa)) is the Fibronectin type-III 1 domain. Ig-like domains follow at residues 702–793 (PSSK…QDIT), 859–951 (PKLV…VAEP), 951–1043 (PKLV…VAEP), 1043–1135 (PKMV…VTEP), 1135–1227 (PKLV…VAEP), 1227–1319 (PKLV…VTEP), 1319–1407 (PKLV…FRLD), 1411–1503 (PKLV…VAEP), 1503–1595 (PKLV…VAEP), 1595–1687 (PKLA…VAEP), 1687–1779 (PKLA…VAEP), 1779–1871 (PKLA…VAEP), 1871–1963 (PKLM…VAEP), 1963–2051 (PKLV…FRLD), 2055–2147 (TRLM…VAEA), 2152–2241 (PERP…EEVA), 2242–2325 (AKFS…ARLT), 2329–2415 (PRVV…AALR), 2420–2504 (PVLF…AKLN), 2598–2681 (PVSF…ASLR), 2721–2812 (PVTL…QSIT), 2900–2984 (PVVL…AEVT), 3078–3162 (PVVF…SKVS), 3258–3342 (PVDI…AKLC), 3348–3431 (NRFT…ARLL), 3527–3610 (PSIF…SSIV), 3616–3700 (PVRF…ATLT), 3785–3876 (ATLT…ATLT), 3881–3964 (PAKF…ATLT), 4042–4125 (PTKF…ATLS), 4130–4213 (PSRF…ATLS), 4219–4301 (PRFI…ATLN), 4307–4389 (PRFI…AVLT), 4395–4477 (PKFT…ATLS), 4483–4565 (PRFI…ATLS), 4571–4653 (PRFI…ATLS), 4659–4741 (PRFI…ATLS), 4746–4829 (PAKF…ATLS), 4833–4916 (PQVV…TSAT), 4923–5007 (PVRF…ARLS), 5013–5105 (PKFK…PEVT), 5378–5464 (LEVL…ARLS), and 5557–5659 (PQMV…TFNV). 14 disulfide bridges follow: Cys885-Cys935, Cys977-Cys1027, Cys1069-Cys1119, Cys1161-Cys1211, Cys1253-Cys1303, Cys1345-Cys1395, Cys1437-Cys1487, Cys1529-Cys1579, Cys1621-Cys1671, Cys1713-Cys1763, Cys1805-Cys1855, Cys1897-Cys1947, Cys1989-Cys2039, and Cys2081-Cys2131. An intrachain disulfide couples Cys2263 to Cys2313. Disulfide bonds link Cys2620-Cys2669, Cys2743-Cys2793, Cys2922-Cys2972, Cys3100-Cys3150, Cys3280-Cys3330, Cys3369-Cys3419, Cys3549-Cys3599, and Cys3638-Cys3688. Ser3321 is modified (phosphoserine). Ser3802 bears the Phosphoserine mark. 14 disulfide bridges follow: Cys3815–Cys3864, Cys3903–Cys3952, Cys4064–Cys4113, Cys4152–Cys4201, Cys4240–Cys4289, Cys4328–Cys4377, Cys4416–Cys4465, Cys4504–Cys4553, Cys4592–Cys4641, Cys4680–Cys4729, Cys4768–Cys4817, Cys4856–Cys4906, Cys4945–Cys4995, and Cys5034–Cys5086. Residue Ser4960 is modified to Phosphoserine. Residues 5471-5569 (PPEDAEVVGR…VKIAPAPAPA (99 aa)) enclose the Fibronectin type-III 2 domain. An intrachain disulfide couples Cys5590 to Cys5643. A Phosphoserine modification is found at Ser5699. Residues 5700–5736 (REPTLDSISELPEEDSRVQHLRQEAEETAPDLSEGYS) are disordered. Phosphothreonine is present on Thr5703. Ser5706 carries the post-translational modification Phosphoserine. Residues 5713–5724 (EDSRVQHLRQEA) are compositionally biased toward basic and acidic residues. Residue Thr5737 is modified to Phosphothreonine. Ser5754 bears the Phosphoserine mark. The IQ domain maps to 5821-5850 (LDKAAVKIQAAFKGYKVRKEMKQQEGPVFS). The region spanning 5847–5930 (PVFSRTFGDT…QVSTKSGRVS (84 aa)) is the Ig-like 48 domain. Cys5868 and Cys5920 are disulfide-bonded. The disordered stretch occupies residues 5977 to 5996 (EEELFLSADEGPGEPEEPAD). Ig-like domains lie at 6077–6166 (PVFL…AELR), 6209–6298 (PQVL…ARLL), and 6320–6416 (PRIL…LHIS). Cys6098 and Cys6150 are joined by a disulfide. Residues 6504–6546 (KLQVPGGDSDEETKTPSASPRHGRSRPSSSVQESSSESEDGDS) form a disordered region. Ser6512 carries the phosphoserine modification. Thr6518 carries the post-translational modification Phosphothreonine. The segment covering 6519 to 6538 (PSASPRHGRSRPSSSVQESS) has biased composition (low complexity). A phosphoserine mark is found at Ser6520 and Ser6522. In terms of domain architecture, SH3 spans 6549-6616 (EIFDIYVVTA…SPAYLDKRLK (68 aa)). Positions 6642-6826 (RLSSVIQELL…SALPQRAENK (185 aa)) constitute a DH domain. The 110-residue stretch at 6844–6953 (EPIRQGHFIV…WVKEICGIQQ (110 aa)) folds into the PH domain. Arg6924 is an a 1,2-diacyl-sn-glycero-3-phospho-(1D-myo-inositol-4,5-bisphosphate) binding site. Residue Arg6929 coordinates a 1,2-diacyl-sn-glycero-3-phospho-(1D-myo-inositol-3,4-bisphosphate). Ig-like domains follow at residues 6963–7046 (PEFE…GNAS) and 7057–7147 (PRFV…GELY). Disulfide bonds link Cys6984/Cys7036 and Cys7078/Cys7131. The disordered stretch occupies residues 7200 to 7257 (ALGPSPGDLPNTRQSEPPAFEEAASQIPGAASGTPEVSQPGTHKGLEQETTSSGSQGW). Positions 7247–7257 (QETTSSGSQGW) are enriched in polar residues. An Ig-like 54 domain is found at 7306–7394 (PSMQVTIEDV…GQVLCKAELL (89 aa)). Residues 7416 to 7669 (YDVQEEIGRG…TSQCLAHPWF (254 aa)) form the Protein kinase 1 domain. ATP is bound by residues 7422–7430 (IGRGVFGFV) and Lys7445. Residue Asp7535 is the Proton acceptor of the active site. Disordered stretches follow at residues 7717–7810 (GPPD…SPGC), 7879–8106 (EQAS…TTRK), and 8150–8180 (SSEE…VPLR). Ser7779 is modified (phosphoserine). A compositionally biased stretch (low complexity) spans 7793 to 7804 (AAVPASPQSAGP). The span at 7941-7952 (TTAKDRGHKEGF) shows a compositional bias: basic and acidic residues. Positions 7986 to 7996 (SCHSELGSGSQ) are enriched in polar residues. Composition is skewed to low complexity over residues 8000-8014 (GPPS…PPQS) and 8053-8073 (GSLS…ASQV). A Phosphoserine modification is found at Ser8161. Positions 8380-8464 (KGRDQELSDE…VSNPLGTAVT (85 aa)) constitute an Ig-like 55 domain. Cys8401 and Cys8453 form a disulfide bridge. Positions 8474–8566 (PSSSPRPEVG…PSEQVLLGGP (93 aa)) constitute a Fibronectin type-III 3 domain. A Protein kinase 2 domain is found at 8590–8842 (FAFQMQIRRG…ASTCLQCGWL (253 aa)). Residues 8596–8604 (IRRGRFSVV) and Lys8619 contribute to the ATP site. Catalysis depends on Asp8709, which acts as the Proton acceptor.

Belongs to the protein kinase superfamily. CAMK Ser/Thr protein kinase family. Interacts (via protein kinase domain 1) with CDH2 and (via protein kinase domain 1) with ATP1B1. Isoform 2 is found in a complex with DSG2, DESM, GJA1, CDH2 and VCL. Isoform 3 is found in a complex with DSG2, DESM, GJA1, CDH2, ANK3 and VCL. Mg(2+) serves as cofactor. Post-translationally, autophosphorylated by protein kinase domain 1 and 2. In terms of processing, two small isoforms, one probably containing protein kinase domain 2 and a partial protein kinase domain 1 and one containing only protein kinase domain 2, are glycosylated. As to expression, expressed in skeletal muscles including flexor digitorum brevis (FDB), soleus and tibialis anterior muscles, and to a lesser extent in heart muscles (at protein level). Isoform 2 and isoform 3 are expressed in the myocardium (at protein level).

It localises to the cytoplasm. It is found in the myofibril. Its subcellular location is the sarcomere. The protein localises to the m line. The protein resides in the z line. It localises to the cell membrane. It is found in the sarcolemma. Its subcellular location is the nucleus. The protein localises to the secreted. The catalysed reaction is L-seryl-[protein] + ATP = O-phospho-L-seryl-[protein] + ADP + H(+). The enzyme catalyses L-threonyl-[protein] + ATP = O-phospho-L-threonyl-[protein] + ADP + H(+). In terms of biological role, structural component of striated muscles which plays a role in myofibrillogenesis. Probably involved in the assembly of myosin into sarcomeric A bands in striated muscle. Has serine/threonine protein kinase activity and phosphorylates N-cadherin CDH2 and sodium/potassium-transporting ATPase subunit ATP1B1. Binds (via the PH domain) strongly to phosphatidylinositol 3,4-bisphosphate (PtdIns(3,4)P2) and phosphatidylinositol 4,5-bisphosphate (PtdIns(4,5)P2), and to a lesser extent to phosphatidylinositol 3-phosphate (PtdIns(3)P), phosphatidylinositol 4-phosphate (PtdIns(4)P), phosphatidylinositol 5-phosphate (PtdIns(5)P) and phosphatidylinositol 3,4,5-trisphosphate (PtdIns(3,4,5)P3). Isoform 2 and isoform 3: bind phosphatidylinositol bisphosphates (PIP2s) via their PH domains and negatively regulate the PI3K/AKT/mTOR signaling pathway, thus contributing to the regulation of cardiomyocyte size and adhesion. This is Obscurin from Mus musculus (Mouse).